Consider the following 152-residue polypeptide: Large ribosomal subunit protein uL15 (152 aa).

The disordered stretch occupies residues Arg18–Gly37. Residues Ile23–Val35 are compositionally biased toward gly residues.

Belongs to the universal ribosomal protein uL15 family. In terms of assembly, part of the 50S ribosomal subunit.

Binds to the 23S rRNA. The polypeptide is Large ribosomal subunit protein uL15 (Rickettsia bellii (strain OSU 85-389)).